The sequence spans 154 residues: Putative nuclear shuttle protein (154 aa).

Belongs to the nanoviridae nuclear shuttle protein family.

The protein resides in the host nucleus. It localises to the host cytoplasm. Functionally, putative nuclear shuttle protein. The sequence is that of Putative nuclear shuttle protein (DNA-N) from Musa (BBTV).